The following is a 390-amino-acid chain: S-adenosylmethionine synthase 1 (390 aa).

E9 contacts Mg(2+). H15 contacts ATP. A K(+)-binding site is contributed by E43. Residues E56 and Q99 each contribute to the L-methionine site. ATP is bound by residues 167 to 169 (DGK), 235 to 238 (SGRF), D246, 252 to 253 (RK), A269, K273, and K277. Position 246 (D246) interacts with L-methionine. K277 provides a ligand contact to L-methionine.

This sequence belongs to the AdoMet synthase family. In terms of assembly, homotetramer. Mn(2+) is required as a cofactor. The cofactor is Mg(2+). Requires Co(2+) as cofactor. K(+) serves as cofactor.

It localises to the cytoplasm. It carries out the reaction L-methionine + ATP + H2O = S-adenosyl-L-methionine + phosphate + diphosphate. It functions in the pathway amino-acid biosynthesis; S-adenosyl-L-methionine biosynthesis; S-adenosyl-L-methionine from L-methionine: step 1/1. Functionally, catalyzes the formation of S-adenosylmethionine from methionine and ATP. The reaction comprises two steps that are both catalyzed by the same enzyme: formation of S-adenosylmethionine (AdoMet) and triphosphate, and subsequent hydrolysis of the triphosphate. The protein is S-adenosylmethionine synthase 1 (SAMS1) of Nicotiana tabacum (Common tobacco).